Consider the following 128-residue polypeptide: MTIDEIIEAIEKLTVSELAELVKKLEDKFGVTAAAPVAVAAAPVAGAAAGAAQEEKTEFDVVLKSFGQNKIQVIKVVREITGLGLKEAKDLVEKAGSPDAIIKSGVPKQEAEDIKKKLEEAGAEVELK.

This sequence belongs to the bacterial ribosomal protein bL12 family. Homodimer. Part of the ribosomal stalk of the 50S ribosomal subunit. Forms a multimeric L10(L12)X complex, where L10 forms an elongated spine to which 2 to 4 L12 dimers bind in a sequential fashion. Binds GTP-bound translation factors.

Functionally, forms part of the ribosomal stalk which helps the ribosome interact with GTP-bound translation factors. Is thus essential for accurate translation. This Thermotoga petrophila (strain ATCC BAA-488 / DSM 13995 / JCM 10881 / RKU-1) protein is Large ribosomal subunit protein bL12.